A 405-amino-acid chain; its full sequence is Glucose-1-phosphate adenylyltransferase (405 aa).

Alpha-D-glucose 1-phosphate-binding positions include Y96, G161, 176–177 (EK), and S194.

The protein belongs to the bacterial/plant glucose-1-phosphate adenylyltransferase family. Homotetramer.

The enzyme catalyses alpha-D-glucose 1-phosphate + ATP + H(+) = ADP-alpha-D-glucose + diphosphate. The protein operates within glycan biosynthesis; glycogen biosynthesis. Involved in the biosynthesis of ADP-glucose, a building block required for the elongation reactions to produce glycogen. Catalyzes the reaction between ATP and alpha-D-glucose 1-phosphate (G1P) to produce pyrophosphate and ADP-Glc. The polypeptide is Glucose-1-phosphate adenylyltransferase (Aliivibrio fischeri (strain ATCC 700601 / ES114) (Vibrio fischeri)).